A 753-amino-acid chain; its full sequence is Pumilio homolog 23 (753 aa).

The interval 1-84 is disordered; that stretch reads MVSVGSKSLP…SEFEHQNQFV (84 aa). Composition is skewed to basic and acidic residues over residues 23–38, 47–57, and 73–84; these read MGER…ERNK, GNRGFDVDSSK, and KHSEFEHQNQFV. Pumilio repeat units lie at residues 123-158, 159-198, 206-244, 284-325, 345-380, 381-418, 526-563, and 564-599; these read ETRG…SFIR, NSAS…SVIE, KVIV…ELYG, GLLS…EIIP, NVAK…EMFN, KVFK…IMWE, SMKA…RLII, and KLRG…AIAS. In terms of domain architecture, PUM-HD spans 322–675; that stretch reads EIIPLILRCN…DASEDAAQEI (354 aa). Basic and acidic residues-rich tracts occupy residues 677 to 688, 699 to 712, and 719 to 728; these read VKNTRKEIDHHP, HAKD…GEKR, and KTSEATDKPK. A disordered region spans residues 677–753; the sequence is VKNTRKEIDH…KNRHSNKMRI (77 aa). A compositionally biased stretch (basic residues) spans 744-753; sequence KNRHSNKMRI.

It is found in the nucleus. It localises to the nucleolus. Sequence-specific RNA-binding protein that regulates translation and mRNA stability by binding the 3'-UTR of target mRNAs. The protein is Pumilio homolog 23 (APUM23) of Arabidopsis thaliana (Mouse-ear cress).